Reading from the N-terminus, the 141-residue chain is Methylglyoxal synthase (141 aa).

One can recognise an MGS-like domain in the interval 1 to 141; sequence MNIALIAHDK…PKLQKNKSDK (141 aa). Residues His8, Lys12, and 34–37 contribute to the substrate site; that span reads TGTT. The Proton donor/acceptor role is filled by Asp60. Substrate is bound at residue His87.

Belongs to the methylglyoxal synthase family.

It catalyses the reaction dihydroxyacetone phosphate = methylglyoxal + phosphate. In terms of biological role, catalyzes the formation of methylglyoxal from dihydroxyacetone phosphate. The chain is Methylglyoxal synthase from Caldicellulosiruptor bescii (strain ATCC BAA-1888 / DSM 6725 / KCTC 15123 / Z-1320) (Anaerocellum thermophilum).